An 88-amino-acid chain; its full sequence is Small ribosomal subunit protein uS17 (88 aa).

This sequence belongs to the universal ribosomal protein uS17 family. Part of the 30S ribosomal subunit.

Its function is as follows. One of the primary rRNA binding proteins, it binds specifically to the 5'-end of 16S ribosomal RNA. The chain is Small ribosomal subunit protein uS17 from Helicobacter hepaticus (strain ATCC 51449 / 3B1).